We begin with the raw amino-acid sequence, 188 residues long: UPF0301 protein XC_1365 (188 aa).

The protein belongs to the UPF0301 (AlgH) family.

This Xanthomonas campestris pv. campestris (strain 8004) protein is UPF0301 protein XC_1365.